A 1273-amino-acid polypeptide reads, in one-letter code: DNA polymerase 037L (1273 aa).

Positions 679 to 837 (IRKNAITEEL…ENKSKEDIDE (159 aa)) form a coiled coil.

This sequence belongs to the DNA polymerase type-B family.

The enzyme catalyses DNA(n) + a 2'-deoxyribonucleoside 5'-triphosphate = DNA(n+1) + diphosphate. Its function is as follows. DNA-directed DNA polymerase involved in viral DNA replication. This is DNA polymerase 037L (DPOL) from Invertebrate iridescent virus 6 (IIV-6).